The primary structure comprises 179 residues: MEQYHGTTILSVRRGRRVALGGDGQVTLGNVVIKATARKVRPIYQGRILAGFAGGTADAFTLFERFEAKLEKHQGNVLRSAVELAKDWRTDRMLRRLEAMLAVADPDNSLVITGNGDVLEPEQGIVAIGSGGAYAQSAARALLENTALPPEEIVKKSLQIAGDLCIYTNQSHVIEVLEG.

Residue T7 is part of the active site. Na(+)-binding residues include G162, C165, and T168.

It belongs to the peptidase T1B family. HslV subfamily. In terms of assembly, a double ring-shaped homohexamer of HslV is capped on each side by a ring-shaped HslU homohexamer. The assembly of the HslU/HslV complex is dependent on binding of ATP.

It localises to the cytoplasm. It carries out the reaction ATP-dependent cleavage of peptide bonds with broad specificity.. Allosterically activated by HslU binding. Functionally, protease subunit of a proteasome-like degradation complex believed to be a general protein degrading machinery. The sequence is that of ATP-dependent protease subunit HslV from Aromatoleum aromaticum (strain DSM 19018 / LMG 30748 / EbN1) (Azoarcus sp. (strain EbN1)).